A 479-amino-acid polypeptide reads, in one-letter code: MSPQTETKASVGFKAGVKEYKLTYYTPEYETKDTDILAAFRVTPQPGVPPEEAGAAVAAESSTGTWTTVWTDGLTSLDRYKGRCYHIEPVPGEETQFIAYVAYPLDLFEEGSVTNMFTSIVGNVFGFKALAALRLEDLRIPPAYTKTFQGPPHGIQVERDKLNKYGRPLLGCTIKPKLGLSAKNYGRAVYECLRGGLDFTKDDENVNSQPFMRWRDRFLFCAEAIYKSQAETGEIKGHYLNATAGTCEEMIKRAVFARELGVPIVMHDYLTGGFTANTSLSHYCRDNGLLLHIHRAMHAVIDRQKNHGMHFRVLAKALRLSGGDHIHAGTVVGKLEGDRESTLGFVDLLRDDYVEKDRSRGIFFTQDWVSLPGVLPVASGGIHVWHMPALTEIFGDDSVLQFGGGTLGHPWGNAPGAVANRVALEACVQARNEGRDLAVEGNEIIREACKWSPELAAACEVWKEIRFNFPTIDKLDGQA.

A propeptide spanning residues 1-2 (MS) is cleaved from the precursor. Substrate-binding residues include Asn-123 and Thr-173. Residue Lys-175 is the Proton acceptor of the active site. Position 177 (Lys-177) interacts with substrate. Mg(2+) contacts are provided by Lys-201, Asp-203, and Glu-204. N6-carboxylysine is present on Lys-201. At Ser-208 the chain carries Phosphoserine. Catalysis depends on His-294, which acts as the Proton acceptor. Positions 295 and 327 each coordinate substrate. Thr-330 is modified (phosphothreonine). Ser-379 lines the substrate pocket.

The protein belongs to the RuBisCO large chain family. Type I subfamily. As to quaternary structure, heterohexadecamer of 8 large chains and 8 small chains; disulfide-linked. The disulfide link is formed within the large subunit homodimers. Mg(2+) serves as cofactor. The disulfide bond which can form in the large chain dimeric partners within the hexadecamer appears to be associated with oxidative stress and protein turnover.

The protein resides in the plastid. The protein localises to the chloroplast. The catalysed reaction is 2 (2R)-3-phosphoglycerate + 2 H(+) = D-ribulose 1,5-bisphosphate + CO2 + H2O. It catalyses the reaction D-ribulose 1,5-bisphosphate + O2 = 2-phosphoglycolate + (2R)-3-phosphoglycerate + 2 H(+). In terms of biological role, ruBisCO catalyzes two reactions: the carboxylation of D-ribulose 1,5-bisphosphate, the primary event in carbon dioxide fixation, as well as the oxidative fragmentation of the pentose substrate in the photorespiration process. Both reactions occur simultaneously and in competition at the same active site. The protein is Ribulose bisphosphate carboxylase large chain of Draba nemorosa (Woodland whitlowgrass).